A 487-amino-acid polypeptide reads, in one-letter code: Serine carboxypeptidase-like 37 (487 aa).

An N-terminal signal peptide occupies residues 1–28 (MVKQQDWSVTTCVLLFLFLASQIHCRSG). Asparagine 105 carries an N-linked (GlcNAc...) asparagine glycan. Cystine bridges form between cysteine 120–cysteine 368, cysteine 280–cysteine 291, and cysteine 315–cysteine 336. Serine 215 is an active-site residue. Residues asparagine 317, asparagine 357, and asparagine 375 are each glycosylated (N-linked (GlcNAc...) asparagine). Aspartate 407 is a catalytic residue. Residues asparagine 423 and asparagine 449 are each glycosylated (N-linked (GlcNAc...) asparagine). Histidine 460 is an active-site residue.

The protein belongs to the peptidase S10 family. As to expression, expressed in seedlings, roots, leaves, stems, flowers and siliques.

The protein resides in the secreted. Probable carboxypeptidase. The polypeptide is Serine carboxypeptidase-like 37 (SCPL37) (Arabidopsis thaliana (Mouse-ear cress)).